Reading from the N-terminus, the 92-residue chain is Probable Fe(2+)-trafficking protein (92 aa).

The protein belongs to the Fe(2+)-trafficking protein family.

Its function is as follows. Could be a mediator in iron transactions between iron acquisition and iron-requiring processes, such as synthesis and/or repair of Fe-S clusters in biosynthetic enzymes. The chain is Probable Fe(2+)-trafficking protein from Shewanella oneidensis (strain ATCC 700550 / JCM 31522 / CIP 106686 / LMG 19005 / NCIMB 14063 / MR-1).